A 117-amino-acid polypeptide reads, in one-letter code: Mitochondrial import inner membrane translocase subunit Tim10B (117 aa).

The short motif at cysteine 22 to cysteine 46 is the Twin CX3C motif element. Disulfide bonds link cysteine 22–cysteine 46 and cysteine 26–cysteine 42. The span at glutamate 75 to glutamate 97 shows a compositional bias: basic and acidic residues. A disordered region spans residues glutamate 75–methionine 117.

It belongs to the small Tim family. In terms of assembly, component of the TIM22 complex, whose core is composed of Tim22, associated with peripheral protein Tim9b/Tim10b and the 70 kDa heterohexamer. In most cases, the 70 kDa complex is composed of TIMM9 and TIMM10.

The protein localises to the mitochondrion inner membrane. In terms of biological role, component of the TIM22 complex, a complex that mediates the import and insertion of multi-pass transmembrane proteins into the mitochondrial inner membrane. The TIM22 complex forms a twin-pore translocase that uses the membrane potential as the external driving force. In the TIM22 complex, it may act as a docking point for the soluble 70 kDa complex that guides the target proteins in transit through the aqueous mitochondrial intermembrane space. In Drosophila melanogaster (Fruit fly), this protein is Mitochondrial import inner membrane translocase subunit Tim10B (Tim9b).